The primary structure comprises 252 residues: tRNA (guanine-N(1)-)-methyltransferase (252 aa).

Residues glycine 117 and 137-142 (IGDYVL) contribute to the S-adenosyl-L-methionine site.

It belongs to the RNA methyltransferase TrmD family. In terms of assembly, homodimer.

Its subcellular location is the cytoplasm. It carries out the reaction guanosine(37) in tRNA + S-adenosyl-L-methionine = N(1)-methylguanosine(37) in tRNA + S-adenosyl-L-homocysteine + H(+). Functionally, specifically methylates guanosine-37 in various tRNAs. The protein is tRNA (guanine-N(1)-)-methyltransferase of Idiomarina loihiensis (strain ATCC BAA-735 / DSM 15497 / L2-TR).